We begin with the raw amino-acid sequence, 793 residues long: Serine/threonine-protein phosphatase 1 regulatory subunit GAC1 (793 aa).

The span at 1 to 10 shows a compositional bias: polar residues; sequence MVIQTATTLS. Residues 1–20 form a disordered region; the sequence is MVIQTATTLSPAKARPSFPH. In terms of domain architecture, CBM21 spans 235–360; that stretch reads TKYLNGQNVK…NNNGKNYHLF (126 aa). A phosphoserine mark is found at S415 and S424. Disordered regions lie at residues 450–491 and 616–671; these read LENA…SIDL and TTMD…LNDH. Residues 623–633 are compositionally biased toward polar residues; that stretch reads KTSTINNSTDT. The span at 637–648 shows a compositional bias: basic and acidic residues; that stretch reads PSKENGTVKENK. The span at 649 to 665 shows a compositional bias: low complexity; that stretch reads SSANSTSAPSSSQNRAS.

In terms of biological role, regulates the activity of glycogen synthase. It is most probably a regulatory subunit for protein phosphatase type 1. The chain is Serine/threonine-protein phosphatase 1 regulatory subunit GAC1 (GAC1) from Saccharomyces cerevisiae (strain ATCC 204508 / S288c) (Baker's yeast).